We begin with the raw amino-acid sequence, 216 residues long: MRDQEFWHSKWASNQIGFHLEDVNPLLPAYWHHANPKREDKVLVPLCGKSEDLVWLATKHDSVEGVELSQIAVRSFFAEHFYTPTVTPISGMHELYQFDELSIYTGDFFTAPVSQADIVYDRAALVALPQDMREEYVARLKQLLNPGGRILLVTLNYPQEEMAGPPFSVPLEEIQQLFAGYKVTCLNVDQADEHHPKIAKKGLSRFSEEVYLIEAQ.

Residues Trp11, Leu46, Glu67, and Arg122 each coordinate S-adenosyl-L-methionine.

It belongs to the class I-like SAM-binding methyltransferase superfamily. TPMT family.

Its subcellular location is the cytoplasm. The enzyme catalyses S-adenosyl-L-methionine + a thiopurine = S-adenosyl-L-homocysteine + a thiopurine S-methylether.. This chain is Thiopurine S-methyltransferase, found in Vibrio parahaemolyticus serotype O3:K6 (strain RIMD 2210633).